The following is a 56-amino-acid chain: UPF0391 membrane protein Noc_0482 (56 aa).

Helical transmembrane passes span 1-21 and 29-49; these read MFGW…FGFT and HIAW…LLLG.

The protein belongs to the UPF0391 family.

The protein resides in the cell membrane. The polypeptide is UPF0391 membrane protein Noc_0482 (Nitrosococcus oceani (strain ATCC 19707 / BCRC 17464 / JCM 30415 / NCIMB 11848 / C-107)).